The primary structure comprises 355 residues: Homoserine O-succinyltransferase (355 aa).

Cys-146 acts as the Acyl-thioester intermediate in catalysis. Substrate-binding residues include Lys-167 and Ser-196. The Proton acceptor role is filled by His-239. Glu-241 is an active-site residue. Arg-253 contributes to the substrate binding site.

The protein belongs to the MetA family.

The protein localises to the cytoplasm. The catalysed reaction is L-homoserine + succinyl-CoA = O-succinyl-L-homoserine + CoA. It functions in the pathway amino-acid biosynthesis; L-methionine biosynthesis via de novo pathway; O-succinyl-L-homoserine from L-homoserine: step 1/1. In terms of biological role, transfers a succinyl group from succinyl-CoA to L-homoserine, forming succinyl-L-homoserine. The chain is Homoserine O-succinyltransferase from Methylococcus capsulatus (strain ATCC 33009 / NCIMB 11132 / Bath).